Here is a 557-residue protein sequence, read N- to C-terminus: ABC1 family protein MCP2 homolog (557 aa).

Residues 1–33 (MFSRFSWPRITRCFRSYPKKKSSCISFTHHARE) constitute a mitochondrion transit peptide. Over 34–39 (HTNFKK) the chain is Mitochondrial matrix. The chain crosses the membrane as a helical span at residues 40 to 56 (PAVVGASITLMASVALV). At 57–557 (DFDPVKHAGV…NYFYYKHMYL (501 aa)) the chain is on the mitochondrial intermembrane side.

Belongs to the protein kinase superfamily. ADCK protein kinase family.

The protein localises to the mitochondrion inner membrane. Its function is as follows. Involved in mitochondrial lipid homeostasis. The protein is ABC1 family protein MCP2 homolog of Schizosaccharomyces pombe (strain 972 / ATCC 24843) (Fission yeast).